We begin with the raw amino-acid sequence, 244 residues long: Probable phosphatase CA_C0509 (244 aa).

Residues H8, H10, H16, H41, E74, H102, H132, D193, and H195 each contribute to the Zn(2+) site.

This sequence belongs to the PHP family. The cofactor is Zn(2+).

The protein is Probable phosphatase CA_C0509 of Clostridium acetobutylicum (strain ATCC 824 / DSM 792 / JCM 1419 / IAM 19013 / LMG 5710 / NBRC 13948 / NRRL B-527 / VKM B-1787 / 2291 / W).